A 712-amino-acid chain; its full sequence is Glycine--tRNA ligase beta subunit (712 aa).

It belongs to the class-II aminoacyl-tRNA synthetase family. Tetramer of two alpha and two beta subunits.

The protein resides in the cytoplasm. It carries out the reaction tRNA(Gly) + glycine + ATP = glycyl-tRNA(Gly) + AMP + diphosphate. This is Glycine--tRNA ligase beta subunit from Acaryochloris marina (strain MBIC 11017).